The sequence spans 231 residues: Phosphatidylserine decarboxylase proenzyme (231 aa).

Serine 188 functions as the Schiff-base intermediate with substrate; via pyruvic acid in the catalytic mechanism. At serine 188 the chain carries Pyruvic acid (Ser); by autocatalysis.

The protein belongs to the phosphatidylserine decarboxylase family. PSD-A subfamily. Heterodimer of a large membrane-associated beta subunit and a small pyruvoyl-containing alpha subunit. The cofactor is pyruvate. In terms of processing, is synthesized initially as an inactive proenzyme. Formation of the active enzyme involves a self-maturation process in which the active site pyruvoyl group is generated from an internal serine residue via an autocatalytic post-translational modification. Two non-identical subunits are generated from the proenzyme in this reaction, and the pyruvate is formed at the N-terminus of the alpha chain, which is derived from the carboxyl end of the proenzyme. The post-translation cleavage follows an unusual pathway, termed non-hydrolytic serinolysis, in which the side chain hydroxyl group of the serine supplies its oxygen atom to form the C-terminus of the beta chain, while the remainder of the serine residue undergoes an oxidative deamination to produce ammonia and the pyruvoyl prosthetic group on the alpha chain.

It localises to the cell membrane. The enzyme catalyses a 1,2-diacyl-sn-glycero-3-phospho-L-serine + H(+) = a 1,2-diacyl-sn-glycero-3-phosphoethanolamine + CO2. It participates in phospholipid metabolism; phosphatidylethanolamine biosynthesis; phosphatidylethanolamine from CDP-diacylglycerol: step 2/2. In terms of biological role, catalyzes the formation of phosphatidylethanolamine (PtdEtn) from phosphatidylserine (PtdSer). This is Phosphatidylserine decarboxylase proenzyme from Rickettsia africae (strain ESF-5).